Here is a 334-residue protein sequence, read N- to C-terminus: Ketol-acid reductoisomerase (NADP(+)) (334 aa).

One can recognise a KARI N-terminal Rossmann domain in the interval 1 to 181 (MTTVYYDQDV…GATRAGVIET (181 aa)). NADP(+)-binding positions include 25–28 (YGSQ), R48, S52, and 82–85 (DEIQ). The active site involves H107. G133 provides a ligand contact to NADP(+). The KARI C-terminal knotted domain maps to 182–327 (TFKEETETDL…RELREMMPFI (146 aa)). Residues D190, E194, E226, and E230 each contribute to the Mg(2+) site. S251 contributes to the substrate binding site.

Belongs to the ketol-acid reductoisomerase family. Requires Mg(2+) as cofactor.

It catalyses the reaction (2R)-2,3-dihydroxy-3-methylbutanoate + NADP(+) = (2S)-2-acetolactate + NADPH + H(+). The enzyme catalyses (2R,3R)-2,3-dihydroxy-3-methylpentanoate + NADP(+) = (S)-2-ethyl-2-hydroxy-3-oxobutanoate + NADPH + H(+). Its pathway is amino-acid biosynthesis; L-isoleucine biosynthesis; L-isoleucine from 2-oxobutanoate: step 2/4. The protein operates within amino-acid biosynthesis; L-valine biosynthesis; L-valine from pyruvate: step 2/4. Its function is as follows. Involved in the biosynthesis of branched-chain amino acids (BCAA). Catalyzes an alkyl-migration followed by a ketol-acid reduction of (S)-2-acetolactate (S2AL) to yield (R)-2,3-dihydroxy-isovalerate. In the isomerase reaction, S2AL is rearranged via a Mg-dependent methyl migration to produce 3-hydroxy-3-methyl-2-ketobutyrate (HMKB). In the reductase reaction, this 2-ketoacid undergoes a metal-dependent reduction by NADPH to yield (R)-2,3-dihydroxy-isovalerate. This is Ketol-acid reductoisomerase (NADP(+)) from Staphylococcus aureus (strain Mu3 / ATCC 700698).